We begin with the raw amino-acid sequence, 500 residues long: Glutathione reductase (500 aa).

FAD is bound by residues serine 12 and glycine 13. Glutathione is bound at residue serine 12. Arginine 19 is a glutathione binding site. Residues glutamate 32, threonine 39, cysteine 40, and lysine 48 each coordinate FAD. Cysteine 40 and cysteine 45 are joined by a disulfide. Tyrosine 95 provides a ligand contact to glutathione. Alanine 111 contributes to the FAD binding site. Isoleucine 187, glutamate 190, arginine 207, arginine 213, and glycine 272 together coordinate NADP(+). FAD-binding residues include aspartate 312 and threonine 354. Arginine 362 lines the glutathione pocket. Valine 384 is an NADP(+) binding site. Histidine 485 lines the FAD pocket. Histidine 485 functions as the Proton acceptor in the catalytic mechanism.

It belongs to the class-I pyridine nucleotide-disulfide oxidoreductase family. In terms of assembly, homodimer. FAD serves as cofactor.

It localises to the cytoplasm. It catalyses the reaction 2 glutathione + NADP(+) = glutathione disulfide + NADPH + H(+). Functionally, catalyzes the reduction of glutathione disulfide (GSSG) to reduced glutathione (GSH). Constitutes the major mechanism to maintain a high GSH:GSSG ratio in the cytosol. The chain is Glutathione reductase from Plasmodium falciparum (isolate K1 / Thailand).